Here is a 437-residue protein sequence, read N- to C-terminus: Enolase (437 aa).

Gln-162 is a (2R)-2-phosphoglycerate binding site. Residue Glu-204 is the Proton donor of the active site. Mg(2+)-binding residues include Asp-251, Glu-297, and Asp-324. (2R)-2-phosphoglycerate contacts are provided by Lys-349, Arg-378, Ser-379, and Lys-400. The active-site Proton acceptor is Lys-349.

This sequence belongs to the enolase family. Requires Mg(2+) as cofactor.

It is found in the cytoplasm. The protein resides in the secreted. The protein localises to the cell surface. It catalyses the reaction (2R)-2-phosphoglycerate = phosphoenolpyruvate + H2O. It functions in the pathway carbohydrate degradation; glycolysis; pyruvate from D-glyceraldehyde 3-phosphate: step 4/5. Its function is as follows. Catalyzes the reversible conversion of 2-phosphoglycerate (2-PG) into phosphoenolpyruvate (PEP). It is essential for the degradation of carbohydrates via glycolysis. This is Enolase from Pelodictyon phaeoclathratiforme (strain DSM 5477 / BU-1).